The chain runs to 531 residues: Ribosomal protein uS12 methylthiotransferase RimO (531 aa).

Polar residues-rich tracts occupy residues Met-1 to Ala-19 and His-55 to Val-67. A disordered region spans residues Met-1–Thr-77. Residues Val-68 to Thr-77 show a composition bias toward low complexity. The region spanning Pro-88–Pro-198 is the MTTase N-terminal domain. Residues Cys-97, Cys-133, Cys-162, Cys-236, Cys-240, and Cys-243 each contribute to the [4Fe-4S] cluster site. Positions Leu-222–Gln-459 constitute a Radical SAM core domain. In terms of domain architecture, TRAM spans Gln-462–Gly-531.

Belongs to the methylthiotransferase family. RimO subfamily. [4Fe-4S] cluster is required as a cofactor.

It is found in the cytoplasm. It carries out the reaction L-aspartate(89)-[ribosomal protein uS12]-hydrogen + (sulfur carrier)-SH + AH2 + 2 S-adenosyl-L-methionine = 3-methylsulfanyl-L-aspartate(89)-[ribosomal protein uS12]-hydrogen + (sulfur carrier)-H + 5'-deoxyadenosine + L-methionine + A + S-adenosyl-L-homocysteine + 2 H(+). Its function is as follows. Catalyzes the methylthiolation of an aspartic acid residue of ribosomal protein uS12. This Psychrobacter cryohalolentis (strain ATCC BAA-1226 / DSM 17306 / VKM B-2378 / K5) protein is Ribosomal protein uS12 methylthiotransferase RimO.